We begin with the raw amino-acid sequence, 531 residues long: Lysine--tRNA ligase, mitochondrial (531 aa).

The transit peptide at 1–18 (MISRGLLSKGILSIIKRK) directs the protein to the mitochondrion.

It belongs to the class-II aminoacyl-tRNA synthetase family.

The protein localises to the mitochondrion. It catalyses the reaction tRNA(Lys) + L-lysine + ATP = L-lysyl-tRNA(Lys) + AMP + diphosphate. The protein is Lysine--tRNA ligase, mitochondrial (msk1) of Schizosaccharomyces pombe (strain 972 / ATCC 24843) (Fission yeast).